Here is a 486-residue protein sequence, read N- to C-terminus: Siroheme synthase (486 aa).

The tract at residues M1–L203 is precorrin-2 dehydrogenase /sirohydrochlorin ferrochelatase. Residues A22–V23 and K43–H44 contribute to the NAD(+) site. S128 is modified (phosphoserine). The segment at G217 to A486 is uroporphyrinogen-III C-methyltransferase. P226 lines the S-adenosyl-L-methionine pocket. D249 functions as the Proton acceptor in the catalytic mechanism. Residue K271 is the Proton donor of the active site. S-adenosyl-L-methionine is bound by residues G302–D304, V307, T332–A333, M384, and G413.

This sequence in the N-terminal section; belongs to the precorrin-2 dehydrogenase / sirohydrochlorin ferrochelatase family. The protein in the C-terminal section; belongs to the precorrin methyltransferase family.

The catalysed reaction is uroporphyrinogen III + 2 S-adenosyl-L-methionine = precorrin-2 + 2 S-adenosyl-L-homocysteine + H(+). The enzyme catalyses precorrin-2 + NAD(+) = sirohydrochlorin + NADH + 2 H(+). It catalyses the reaction siroheme + 2 H(+) = sirohydrochlorin + Fe(2+). It functions in the pathway cofactor biosynthesis; adenosylcobalamin biosynthesis; precorrin-2 from uroporphyrinogen III: step 1/1. Its pathway is cofactor biosynthesis; adenosylcobalamin biosynthesis; sirohydrochlorin from precorrin-2: step 1/1. The protein operates within porphyrin-containing compound metabolism; siroheme biosynthesis; precorrin-2 from uroporphyrinogen III: step 1/1. It participates in porphyrin-containing compound metabolism; siroheme biosynthesis; siroheme from sirohydrochlorin: step 1/1. It functions in the pathway porphyrin-containing compound metabolism; siroheme biosynthesis; sirohydrochlorin from precorrin-2: step 1/1. In terms of biological role, multifunctional enzyme that catalyzes the SAM-dependent methylations of uroporphyrinogen III at position C-2 and C-7 to form precorrin-2 via precorrin-1. Then it catalyzes the NAD-dependent ring dehydrogenation of precorrin-2 to yield sirohydrochlorin. Finally, it catalyzes the ferrochelation of sirohydrochlorin to yield siroheme. The chain is Siroheme synthase from Neisseria meningitidis serogroup A / serotype 4A (strain DSM 15465 / Z2491).